The sequence spans 558 residues: Protein NRT1/ PTR FAMILY 2.3 (558 aa).

12 helical membrane passes run 33–53, 69–89, 92–112, 128–148, 176–196, 203–223, 329–349, 371–391, 403–423, 439–459, 478–498, and 517–537; these read TLLG…VFLI, VANG…DSFF, IPVI…LTLI, VLCT…LALV, FFNW…TAIV, SWKL…IVFV, LWLS…LIVL, VIII…VFPM, LQKV…SAVV, VLWL…QFPA, SLTS…IDLI, and VYWL…VCSW.

This sequence belongs to the major facilitator superfamily. Proton-dependent oligopeptide transporter (POT/PTR) (TC 2.A.17) family. Expressed in flowers, siliques and root epidermis or cortex. Detected in shoots.

The protein resides in the membrane. Transporter involved in a passive nitrate efflux. This is Protein NRT1/ PTR FAMILY 2.3 (NPF2.3) from Arabidopsis thaliana (Mouse-ear cress).